The primary structure comprises 491 residues: Lysine--tRNA ligase (491 aa).

Residues glutamate 400 and glutamate 407 each contribute to the Mg(2+) site.

The protein belongs to the class-II aminoacyl-tRNA synthetase family. Homodimer. Requires Mg(2+) as cofactor.

The protein localises to the cytoplasm. The enzyme catalyses tRNA(Lys) + L-lysine + ATP = L-lysyl-tRNA(Lys) + AMP + diphosphate. In Mesomycoplasma hyopneumoniae (strain J / ATCC 25934 / NCTC 10110) (Mycoplasma hyopneumoniae), this protein is Lysine--tRNA ligase.